Consider the following 304-residue polypeptide: Porphobilinogen deaminase (304 aa).

Cys240 is subject to S-(dipyrrolylmethanemethyl)cysteine.

The protein belongs to the HMBS family. As to quaternary structure, monomer. Dipyrromethane is required as a cofactor.

It catalyses the reaction 4 porphobilinogen + H2O = hydroxymethylbilane + 4 NH4(+). The protein operates within porphyrin-containing compound metabolism; protoporphyrin-IX biosynthesis; coproporphyrinogen-III from 5-aminolevulinate: step 2/4. Functionally, tetrapolymerization of the monopyrrole PBG into the hydroxymethylbilane pre-uroporphyrinogen in several discrete steps. The protein is Porphobilinogen deaminase of Xanthomonas axonopodis pv. citri (strain 306).